We begin with the raw amino-acid sequence, 2968 residues long: Trinucleotide repeat-containing gene 18 protein (2968 aa).

Disordered regions lie at residues 1-24 and 139-261; these read MDGR…SGLA and GSPL…LAER. Positions 139–150 are enriched in low complexity; it reads GSPLLSQLGQPS. Basic and acidic residues-rich tracts occupy residues 221-233 and 243-260; these read GKKD…EEAS and QEAR…RLAE. Phosphoserine is present on serine 263. Residues 304–322 are compositionally biased toward basic and acidic residues; it reads GAKEAARQDEGARLLRRTE. Disordered stretches follow at residues 304 to 356 and 381 to 488; these read GAKE…PAGV and FDER…PAAQ. A compositionally biased stretch (pro residues) spans 327 to 351; it reads GPRPCPSPLPPPPAPPKGPPAPPAA. Composition is skewed to basic and acidic residues over residues 395 to 405, 419 to 431, and 464 to 479; these read RDARAREREAG, PLDR…EKNS, and ELLK…ERAP. Serine 611 bears the Phosphoserine mark. Disordered regions lie at residues 612 to 679, 941 to 1002, 1019 to 1055, 1106 to 1190, 1212 to 1236, 1279 to 1306, 1497 to 1566, and 1687 to 1855; these read PFGG…EVRH, EHRA…SPVA, PAYA…PENV, DADG…MATP, SCAE…PGRT, LAQV…GQCP, KQRE…SDDY, and SLKS…RERA. A Glycyl lysine isopeptide (Lys-Gly) (interchain with G-Cter in SUMO2) cross-link involves residue lysine 620. Composition is skewed to basic and acidic residues over residues 651-660 and 941-955; these read LKRDPERPES and EHRA…KRGL. A coiled-coil region spans residues 916 to 949; the sequence is LQQQAAQALELQRSAQLVQERLKAQEHRAEMEEK. Low complexity-rich tracts occupy residues 966-983 and 1019-1031; these read AGPG…AGPA and PAYA…SSHP. The segment covering 1032-1043 has biased composition (pro residues); sequence TSPPPASPPPTP. Over residues 1046 to 1055 the composition is skewed to basic and acidic residues; sequence TRKEEAPENV. A phosphoserine mark is found at serine 1127 and serine 1136. Positions 1142-1162 are enriched in basic and acidic residues; the sequence is EPLREGPEEEPLAEREVKAEV. A compositionally biased stretch (pro residues) spans 1171–1181; that stretch reads ELPPLESPLPL. Residues 1481 to 1516 are a coiled coil; sequence LDFRMRLAEVQRQYKEKQRELVKLQRRRDSEDRREE. Positions 1497 to 1519 are enriched in basic and acidic residues; that stretch reads KQRELVKLQRRRDSEDRREEPHR. Positions 1520–1534 are enriched in basic residues; that stretch reads SLARRGPGRPRKRTH. Serine 1540 is subject to Phosphoserine. Over residues 1549-1563 the composition is skewed to low complexity; the sequence is GHSSGKLSSKSLLTS. The span at 1816 to 1842 shows a compositional bias: acidic residues; the sequence is SSEESFDQDESSEEEDEEEELEEEDEA. A phosphoserine mark is found at serine 1857 and serine 1863. Disordered stretches follow at residues 1912–2148 and 2295–2771; these read YTDS…LTPA and LLVP…RLPS. 2 stretches are compositionally biased toward basic and acidic residues: residues 1957 to 1968 and 1993 to 2004; these read SPDKAKLAVEKG and LWTRRRSERIFL. Over residues 2007-2024 the composition is skewed to low complexity; the sequence is ASAAAPAPVSTAPATKTS. The segment covering 2034 to 2046 has biased composition (basic and acidic residues); the sequence is PRKDAGRAKDRKD. The segment covering 2069–2085 has biased composition (low complexity); it reads ALPSEARAPHASSLTAA. The span at 2093 to 2103 shows a compositional bias: basic and acidic residues; it reads KGKEVKKENRG. A Phosphothreonine modification is found at threonine 2146. The span at 2307–2316 shows a compositional bias: basic and acidic residues; sequence TSKDTGEGKD. A compositionally biased stretch (basic residues) spans 2329–2338; sequence ARGRGRKPSA. A compositionally biased stretch (low complexity) spans 2365–2374; sequence EPSSTPGSKK. Positions 2375–2384 are enriched in basic and acidic residues; that stretch reads SPPEPVDKRA. Residues 2390–2401 show a composition bias toward pro residues; it reads RPAPPQPSPAPP. Low complexity predominate over residues 2411–2433; the sequence is PFAELPAPATSLAPAPLITMPAT. Composition is skewed to basic and acidic residues over residues 2441–2468 and 2477–2487; these read RAAE…DHEG and AKEALLLREDP. Composition is skewed to low complexity over residues 2559–2580 and 2603–2671; these read SSSS…SGSE and SAAS…SSSS. Residues 2673 to 2685 show a composition bias toward acidic residues; it reads TDEDSSCSSDDEA. Positions 2723 to 2736 are enriched in pro residues; sequence APQPQAPPPQPTQP. Serine 2771 is modified (phosphoserine). Residues 2817 to 2962 enclose the BAH domain; it reads EMIRIGDCAV…PTTGMIFSTD (146 aa).

The chain is Trinucleotide repeat-containing gene 18 protein from Homo sapiens (Human).